A 132-amino-acid chain; its full sequence is Telomere bouquet protein 1 (132 aa).

As to quaternary structure, interacts with bqt2 and sad1. The bqt1-bqt2-sad1 complex binds rap1.

It localises to the cytoplasm. It is found in the cytoskeleton. Its subcellular location is the microtubule organizing center. The protein localises to the spindle pole body. The protein resides in the chromosome. It localises to the telomere. In terms of biological role, involved in chromosome segregation. During meiotic prophase, connects telomeres to the spindle pole body by forming a bridge between the telomere protein rap1 and the spindle pole body protein sad1. The chain is Telomere bouquet protein 1 (bqt1) from Schizosaccharomyces pombe (strain 972 / ATCC 24843) (Fission yeast).